We begin with the raw amino-acid sequence, 711 residues long: Interferon-induced GTP-binding protein Mx2 (711 aa).

The Dynamin-type G domain occupies 115-387 (DLALPAIAVI…LILHINKSLP (273 aa)). A G1 motif region spans residues 125–132 (GDQSSGKS). 125 to 132 (GDQSSGKS) contacts GTP. The tract at residues 150–152 (VTR) is G2 motif. The G3 motif stretch occupies residues 225–228 (DLPG). GTP contacts are provided by residues 225–229 (DLPGI) and 294–297 (TKPD). The segment at 294 to 297 (TKPD) is G4 motif. Positions 326–329 (RCRG) are G5 motif. In terms of domain architecture, GED spans 623–711 (NDEIGVHLNA…ARRALYMFFS (89 aa)).

The protein belongs to the TRAFAC class dynamin-like GTPase superfamily. Dynamin/Fzo/YdjA family.

It localises to the cytoplasm. The protein localises to the nucleus. In terms of biological role, interferon-induced dynamin-like GTPase with antiviral activity against vesicular stomatitis virus (VSV). In Canis lupus familiaris (Dog), this protein is Interferon-induced GTP-binding protein Mx2 (MX2).